Here is a 183-residue protein sequence, read N- to C-terminus: Protein Syd (183 aa).

Belongs to the Syd family.

It localises to the cell inner membrane. Functionally, interacts with the SecY protein in vivo. May bind preferentially to an uncomplexed state of SecY, thus functioning either as a chelating agent for excess SecY in the cell or as a regulatory factor that negatively controls the translocase function. The protein is Protein Syd of Aliivibrio fischeri (strain ATCC 700601 / ES114) (Vibrio fischeri).